Reading from the N-terminus, the 247-residue chain is Chromosome partition protein MukE (247 aa).

Residues 213–247 (AQSLQEEKNGLKDNMDQSAVENEQYFENEENEGIA) are disordered. The segment covering 217–227 (QEEKNGLKDNM) has biased composition (basic and acidic residues). Residues 236–247 (QYFENEENEGIA) show a composition bias toward acidic residues.

This sequence belongs to the MukE family. Interacts, and probably forms a ternary complex, with MukF and MukB. The complex formation is stimulated by calcium or magnesium.

The protein localises to the cytoplasm. Its subcellular location is the nucleoid. Involved in chromosome condensation, segregation and cell cycle progression. May participate in facilitating chromosome segregation by condensation DNA from both sides of a centrally located replisome during cell division. Probably acts via its interaction with MukB and MukF. The chain is Chromosome partition protein MukE from Histophilus somni (strain 2336) (Haemophilus somnus).